The primary structure comprises 656 residues: uncharacterized protein (656 aa).

The interval 623–656 is disordered; it reads EIDIPGTPASIDPEWSRPPGSITDDHVFDAPLHR. Positions 645-656 are enriched in basic and acidic residues; it reads TDDHVFDAPLHR.

This is an uncharacterized protein from Mycobacterium tuberculosis (strain ATCC 25618 / H37Rv).